The following is a 316-amino-acid chain: Ribonuclease HIII (316 aa).

The RNase H type-2 domain maps to 101-316 (QVIIGSDEVG…SNFQQIIKNK (216 aa)). A divalent metal cation contacts are provided by aspartate 107, glutamate 108, and aspartate 211.

It belongs to the RNase HII family. RnhC subfamily. Mn(2+) serves as cofactor. Requires Mg(2+) as cofactor.

It is found in the cytoplasm. It catalyses the reaction Endonucleolytic cleavage to 5'-phosphomonoester.. Functionally, endonuclease that specifically degrades the RNA of RNA-DNA hybrids. The polypeptide is Ribonuclease HIII (rnhC) (Ureaplasma parvum serovar 3 (strain ATCC 700970)).